The sequence spans 307 residues: tRNA pseudouridine synthase B (307 aa).

D38 acts as the Nucleophile in catalysis.

This sequence belongs to the pseudouridine synthase TruB family. Type 1 subfamily.

It carries out the reaction uridine(55) in tRNA = pseudouridine(55) in tRNA. In terms of biological role, responsible for synthesis of pseudouridine from uracil-55 in the psi GC loop of transfer RNAs. This chain is tRNA pseudouridine synthase B, found in Bacillus thuringiensis (strain Al Hakam).